Consider the following 450-residue polypeptide: UDP-N-acetylmuramoylalanine--D-glutamate ligase (450 aa).

118–124 (GSNGKTT) serves as a coordination point for ATP.

It belongs to the MurCDEF family.

It is found in the cytoplasm. The enzyme catalyses UDP-N-acetyl-alpha-D-muramoyl-L-alanine + D-glutamate + ATP = UDP-N-acetyl-alpha-D-muramoyl-L-alanyl-D-glutamate + ADP + phosphate + H(+). It functions in the pathway cell wall biogenesis; peptidoglycan biosynthesis. Cell wall formation. Catalyzes the addition of glutamate to the nucleotide precursor UDP-N-acetylmuramoyl-L-alanine (UMA). The chain is UDP-N-acetylmuramoylalanine--D-glutamate ligase from Halalkalibacterium halodurans (strain ATCC BAA-125 / DSM 18197 / FERM 7344 / JCM 9153 / C-125) (Bacillus halodurans).